A 493-amino-acid polypeptide reads, in one-letter code: Cytoplasmic tRNA 2-thiolation protein 2 (493 aa).

Position 489 is a phosphoserine (S489).

It belongs to the CTU2/NCS2 family. As to quaternary structure, interacts with NCS6 and URM1. May act by forming a heterodimer with NCS6.

It localises to the cytoplasm. The protein operates within tRNA modification; 5-methoxycarbonylmethyl-2-thiouridine-tRNA biosynthesis. Plays a central role in 2-thiolation of mcm(5)S(2)U at tRNA wobble positions of tRNA(Lys), tRNA(Glu) and tRNA(Gln). May act by forming a heterodimer with NCS6 that ligates sulfur from thiocarboxylated URM1 onto the uridine of tRNAs at wobble position. Prior mcm(5) tRNA modification by the elongator complex is required for 2-thiolation. May also be involved in protein urmylation and in invasive and pseudohyphal growth. Inhibits replication of Brome mosaic virus. The sequence is that of Cytoplasmic tRNA 2-thiolation protein 2 from Saccharomyces cerevisiae (strain ATCC 204508 / S288c) (Baker's yeast).